A 1383-amino-acid polypeptide reads, in one-letter code: DNA-directed RNA polymerase subunit beta'' (1383 aa).

C220, C289, C296, and C299 together coordinate Zn(2+).

This sequence belongs to the RNA polymerase beta' chain family. RpoC2 subfamily. In terms of assembly, in plastids the minimal PEP RNA polymerase catalytic core is composed of four subunits: alpha, beta, beta', and beta''. When a (nuclear-encoded) sigma factor is associated with the core the holoenzyme is formed, which can initiate transcription. It depends on Zn(2+) as a cofactor.

It localises to the plastid. It is found in the chloroplast. It catalyses the reaction RNA(n) + a ribonucleoside 5'-triphosphate = RNA(n+1) + diphosphate. Its function is as follows. DNA-dependent RNA polymerase catalyzes the transcription of DNA into RNA using the four ribonucleoside triphosphates as substrates. In Oenothera argillicola (Appalachian evening primrose), this protein is DNA-directed RNA polymerase subunit beta''.